Consider the following 326-residue polypeptide: Ficolin-1 (326 aa).

The signal sequence occupies residues 1–29 (MELSGATMARGLAVLLVLFLHIKNLPAQA). The region spanning 55–93 (GLPGAPGPKGEAGVIGERGERGLPGAPGKAGPVGPKGDR) is the Collagen-like domain. Positions 72-111 (RGERGLPGAPGKAGPVGPKGDRGEKGMRGEKGDAGQSQSC) are disordered. A compositionally biased stretch (low complexity) spans 77–89 (LPGAPGKAGPVGP). A compositionally biased stretch (basic and acidic residues) spans 90–104 (KGDRGEKGMRGEKGD). The region spanning 109-326 (QSCATGPRNC…KVSEMKVRPA (218 aa)) is the Fibrinogen C-terminal domain. 2 disulfides stabilise this stretch: Cys-111–Cys-139 and Cys-118–Cys-146. The a domain; contributes to trimerization stretch occupies residues 115 to 154 (PRNCKDLLDRGYFLSGWHTIYLPDCRPLTVLCDMDTDGGG). The b domain; contributes to trimerization stretch occupies residues 155–243 (WTVFQRRMDG…LVLGAFVGGS (89 aa)). Residues Asp-262, Asp-264, Ser-266, and Ser-268 each contribute to the Ca(2+) site. A disulfide bridge links Cys-270 with Cys-283. A carbohydrate is bound at residue 282–284 (DCH). A glycan (N-linked (GlcNAc...) asparagine) is linked at Asn-305. The p domain stretch occupies residues 317 to 326 (KVSEMKVRPA).

Belongs to the ficolin lectin family. As to quaternary structure, homotrimer. Interacts with elastin/ELN. Interacts (via Fibrinogen C-terminal domain) with FFAR2. Interacts with CRP; may regulate monocyte activation by FCN1. Peripheral blood leukocytes, monocytes and granulocytes. Also detected in spleen, lung, and thymus, may be due to the presence of tissue macrophages or trapped blood in these tissues. Not detected on lymphocytes.

It is found in the secreted. Its subcellular location is the cell membrane. Its function is as follows. Extracellular lectin functioning as a pattern-recognition receptor in innate immunity. Binds the sugar moieties of pathogen-associated molecular patterns (PAMPs) displayed on microbes and activates the lectin pathway of the complement system. May also activate monocytes through a G protein-coupled receptor, FFAR2, inducing the secretion of interleukin-8/IL-8. Binds preferentially to 9-O-acetylated 2-6-linked sialic acid derivatives and to various glycans containing sialic acid engaged in a 2-3 linkage. The protein is Ficolin-1 (FCN1) of Homo sapiens (Human).